The sequence spans 353 residues: Phosphate acyltransferase (353 aa).

It belongs to the PlsX family. Homodimer. Probably interacts with PlsY.

It localises to the cytoplasm. The catalysed reaction is a fatty acyl-[ACP] + phosphate = an acyl phosphate + holo-[ACP]. The protein operates within lipid metabolism; phospholipid metabolism. In terms of biological role, catalyzes the reversible formation of acyl-phosphate (acyl-PO(4)) from acyl-[acyl-carrier-protein] (acyl-ACP). This enzyme utilizes acyl-ACP as fatty acyl donor, but not acyl-CoA. This is Phosphate acyltransferase from Nitrosospira multiformis (strain ATCC 25196 / NCIMB 11849 / C 71).